The primary structure comprises 328 residues: Malate dehydrogenase (328 aa).

An NAD(+)-binding site is contributed by 11 to 17 (GAAGQIG). Substrate is bound by residues arginine 92 and arginine 98. NAD(+) contacts are provided by residues asparagine 105, glutamine 112, and 129 to 131 (VGN). Residues asparagine 131 and arginine 162 each coordinate substrate. Histidine 187 acts as the Proton acceptor in catalysis.

This sequence belongs to the LDH/MDH superfamily. MDH type 2 family.

The catalysed reaction is (S)-malate + NAD(+) = oxaloacetate + NADH + H(+). Functionally, catalyzes the reversible oxidation of malate to oxaloacetate. The protein is Malate dehydrogenase of Coxiella burnetii (strain CbuK_Q154) (Coxiella burnetii (strain Q154)).